A 149-amino-acid polypeptide reads, in one-letter code: Ribosome-binding factor A (149 aa).

The disordered stretch occupies residues 125 to 149; sequence FGSADEVLNEDEGATDDTDDTKGKD. The span at 131–143 shows a compositional bias: acidic residues; sequence VLNEDEGATDDTD.

Belongs to the RbfA family. As to quaternary structure, monomer. Binds 30S ribosomal subunits, but not 50S ribosomal subunits or 70S ribosomes.

It localises to the cytoplasm. In terms of biological role, one of several proteins that assist in the late maturation steps of the functional core of the 30S ribosomal subunit. Associates with free 30S ribosomal subunits (but not with 30S subunits that are part of 70S ribosomes or polysomes). Required for efficient processing of 16S rRNA. May interact with the 5'-terminal helix region of 16S rRNA. The protein is Ribosome-binding factor A of Shewanella sp. (strain W3-18-1).